Consider the following 152-residue polypeptide: Ubiquitin-activating enzyme E1 Y (152 aa).

The active-site Glycyl thioester intermediate is the Cys-51.

The protein belongs to the ubiquitin-activating E1 family. Monomer.

The catalysed reaction is ATP + ubiquitin + [E1 ubiquitin-activating enzyme]-L-cysteine = AMP + diphosphate + S-ubiquitinyl-[E1 ubiquitin-activating enzyme]-L-cysteine.. The protein operates within protein modification; protein ubiquitination. Functionally, activates ubiquitin by first adenylating its C-terminal glycine residue with ATP, and thereafter linking this residue to the side chain of a cysteine residue in E1, yielding a ubiquitin-E1 thioester and free AMP. The Y chromosome form could be involved in the survival and proliferation of differentiating spermatogonia. The protein is Ubiquitin-activating enzyme E1 Y (UBE1Y) of Osphranter rufus (Red kangaroo).